The chain runs to 336 residues: MTTNRKDEHILYALEQKSSYNSFDEVELIHSSLPLYNLDEIDLSTEFAGRKWDFPFYINAMTGGSNKGREINQKLAQVAESCGILFVTGSYSAALKNPTDDSFSVKSSHPNLLLGTNIGLDKPVELGLQTVEEMNPVLLQVHVNVMQELLMPEGERKFRSWQSHLADYSKQIPVPIVLKEVGFGMDAKTIERAYEFGVRTVDLSGRGGTSFAYIENRRSGQRDYLNQWGQSTMQALLNAQEWKDKVELLVSGGVRNPLDMIKCLVFGAKAVGLSRTVLELVETYTVEEVIGIVQGWKADLRLIMCSLNCATIADLQKVDYLLYGKLKEANDQMKKA.

Position 5 to 6 (5 to 6) interacts with substrate; that stretch reads RK. Residues 60-62, Ser-90, and Asn-117 each bind FMN; that span reads AMT. Residue Gln-147 coordinates substrate. Glu-148 is a Mg(2+) binding site. FMN contacts are provided by residues Lys-179, Ser-204, Thr-209, 253–255, and 274–275; these read GVR and SR.

It belongs to the IPP isomerase type 2 family. As to quaternary structure, homooctamer. Dimer of tetramers. It depends on FMN as a cofactor. Requires NADPH as cofactor. Mg(2+) is required as a cofactor.

It localises to the cytoplasm. The enzyme catalyses isopentenyl diphosphate = dimethylallyl diphosphate. Its function is as follows. Involved in the biosynthesis of isoprenoids. Catalyzes the 1,3-allylic rearrangement of the homoallylic substrate isopentenyl (IPP) to its allylic isomer, dimethylallyl diphosphate (DMAPP). The polypeptide is Isopentenyl-diphosphate delta-isomerase (Streptococcus pneumoniae (strain 70585)).